A 345-amino-acid chain; its full sequence is Growth hormone-inducible transmembrane protein (345 aa).

The N-terminal 45 residues, 1–45, are a transit peptide targeting the mitochondrion; sequence MLAARLVCLRTLPSRVFHPAFTKASPVVKNSITKNQWLLTPSREY. Topologically, residues 46–82 are mitochondrial matrix; it reads ATKTRIGIRRGRTGQELKEAALEPSMEKIFKIDQMGR. The helical transmembrane segment at 83-103 threads the bilayer; that stretch reads WFVAGGAAVGLGALCYYGLGL. At 104-125 the chain is on the mitochondrial intermembrane side; the sequence is SNEIGAIEKAVIWPQYVKDRIH. The helical transmembrane segment at 126–146 threads the bilayer; sequence STYMYLAGSIGLTALSAIAIS. At 147–159 the chain is on the mitochondrial matrix side; the sequence is RTPVLMNFMMRGS. The helical transmembrane segment at 160 to 180 threads the bilayer; sequence WVTIGVTFAAMVGAGMLVRSI. Over 181-190 the chain is Mitochondrial intermembrane; sequence PYDQSPGPKH. Residues 191–211 form a helical membrane-spanning segment; the sequence is LAWLLHSGVMGAVVAPLTILG. The Mitochondrial matrix portion of the chain corresponds to 212–213; sequence GP. A helical transmembrane segment spans residues 214–234; sequence LLIRAAWYTAGIVGGLSTVAM. Topologically, residues 235-244 are mitochondrial intermembrane; the sequence is CAPSEKFLNM. A helical membrane pass occupies residues 245–265; sequence GAPLGVGLGLVFVSSLGSMFL. Residues 266–271 are Mitochondrial matrix-facing; that stretch reads PPTTVA. A helical transmembrane segment spans residues 272-292; sequence GATLYSVAMYGGLVLFSMFLL. The Mitochondrial intermembrane portion of the chain corresponds to 293–345; that stretch reads YDTQKVIKRAEVSPMYGVQKYDPINSMLSIYMDTLNIFMRVATMLATGGNRKK.

This sequence belongs to the BI1 family. Interacts with LETM1. Interacts with AFG3L2. Post-translationally, undergoes AFG3L2-mediated proteolytic degradation, upon hyperpolarization of mitochondria.

Its subcellular location is the mitochondrion inner membrane. The catalysed reaction is Ca(2+)(in) + 2 H(+)(out) = Ca(2+)(out) + 2 H(+)(in). It catalyses the reaction K(+)(in) + H(+)(out) = K(+)(out) + H(+)(in). Its function is as follows. Plays an important role in maintenance of mitochondrial morphology and in mediating either calcium or potassium/proton antiport. Mediates proton-dependent calcium efflux from mitochondrion. Also functions as an electroneutral mitochondrial proton/potassium exchanger. Required for the mitochondrial tubular network and cristae organization. Involved in apoptotic release of cytochrome c. Inhibits the proteolytic activity of AFG3L2, stimulating respiration and stabilizing respiratory enzymes in actively respiring mitochondria. However, when mitochondria become hyperpolarized, GHITM loses its inhibitory activity toward AFG3L2 and the now the active AFG3L2 turns first on GHITM and, if hyperpolarization persists, on other proteins of the mitochondria, leading to a broad remodeling of the mitochondrial proteome. In Homo sapiens (Human), this protein is Growth hormone-inducible transmembrane protein (GHITM).